A 154-amino-acid chain; its full sequence is Cytochrome c' (154 aa).

The first 23 residues, 1–23 (MKHVLASTAAGLMALGLASSAIA), serve as a signal peptide directing secretion. Heme c is bound by residues arginine 35, glutamine 36, arginine 95, cysteine 144, cysteine 147, and histidine 148.

In terms of assembly, homodimer. Binds 1 heme c group covalently per subunit.

Its function is as follows. Cytochrome c' is the most widely occurring bacterial c-type cytochrome. Cytochromes c' are high-spin proteins and the heme has no sixth ligand. Their exact function is not known. In Allochromatium vinosum (strain ATCC 17899 / DSM 180 / NBRC 103801 / NCIMB 10441 / D) (Chromatium vinosum), this protein is Cytochrome c' (cycA).